A 409-amino-acid polypeptide reads, in one-letter code: L-cysteine:1D-myo-inositol 2-amino-2-deoxy-alpha-D-glucopyranoside ligase (409 aa).

A Zn(2+)-binding site is contributed by cysteine 25. Residues 25–28 (CGIT), threonine 40, and 63–65 (NVT) contribute to the L-cysteinyl-5'-AMP site. The 'HIGH' region signature appears at 27-37 (ITPYDATHIGH). Residues 179 to 184 (ERGGDP) carry the 'ERGGDP' region motif. Tryptophan 219 is a binding site for L-cysteinyl-5'-AMP. Cysteine 223 serves as a coordination point for Zn(2+). Residue 241–243 (GSD) participates in L-cysteinyl-5'-AMP binding. Histidine 248 contacts Zn(2+). Residue valine 274 participates in L-cysteinyl-5'-AMP binding. Positions 280–284 (KMSKS) match the 'KMSKS' region motif.

This sequence belongs to the class-I aminoacyl-tRNA synthetase family. MshC subfamily. In terms of assembly, monomer. It depends on Zn(2+) as a cofactor.

It carries out the reaction 1D-myo-inositol 2-amino-2-deoxy-alpha-D-glucopyranoside + L-cysteine + ATP = 1D-myo-inositol 2-(L-cysteinylamino)-2-deoxy-alpha-D-glucopyranoside + AMP + diphosphate + H(+). In terms of biological role, catalyzes the ATP-dependent condensation of GlcN-Ins and L-cysteine to form L-Cys-GlcN-Ins. In Clavibacter sepedonicus (Clavibacter michiganensis subsp. sepedonicus), this protein is L-cysteine:1D-myo-inositol 2-amino-2-deoxy-alpha-D-glucopyranoside ligase.